Here is a 318-residue protein sequence, read N- to C-terminus: Aspartate carbamoyltransferase catalytic subunit (318 aa).

2 residues coordinate carbamoyl phosphate: arginine 58 and threonine 59. Position 86 (lysine 86) interacts with L-aspartate. The carbamoyl phosphate site is built by arginine 108, histidine 141, and glutamine 144. Arginine 174 and arginine 226 together coordinate L-aspartate. Positions 270 and 271 each coordinate carbamoyl phosphate.

It belongs to the aspartate/ornithine carbamoyltransferase superfamily. ATCase family. In terms of assembly, heterododecamer (2C3:3R2) of six catalytic PyrB chains organized as two trimers (C3), and six regulatory PyrI chains organized as three dimers (R2).

The enzyme catalyses carbamoyl phosphate + L-aspartate = N-carbamoyl-L-aspartate + phosphate + H(+). Its pathway is pyrimidine metabolism; UMP biosynthesis via de novo pathway; (S)-dihydroorotate from bicarbonate: step 2/3. Its function is as follows. Catalyzes the condensation of carbamoyl phosphate and aspartate to form carbamoyl aspartate and inorganic phosphate, the committed step in the de novo pyrimidine nucleotide biosynthesis pathway. This Lactobacillus delbrueckii subsp. bulgaricus (strain ATCC BAA-365 / Lb-18) protein is Aspartate carbamoyltransferase catalytic subunit.